The primary structure comprises 117 residues: G antigen 6 (117 aa).

The tract at residues 1–117 (MSWRGRSTYY…PEEGEKQSQC (117 aa)) is disordered. Composition is skewed to acidic residues over residues 32 to 45 (FSDE…EEGE) and 87 to 96 (ECEDGPDGQE). A compositionally biased stretch (basic and acidic residues) spans 103-117 (EEVKTPEEGEKQSQC).

It belongs to the GAGE family. In terms of tissue distribution, expressed in a variety of tumor tissues but not in normal tissues, except testis.

The sequence is that of G antigen 6 (GAGE6) from Homo sapiens (Human).